We begin with the raw amino-acid sequence, 500 residues long: Ferulic acid decarboxylase 1 (500 aa).

Residues N168, H191, and E233 each contribute to the Mn(2+) site. Residues 168-173 (NWSIAR), 190-191 (QH), and E233 contribute to the prenylated FMN site. The active-site Proton donor is E282. Residue K391 coordinates prenylated FMN.

The protein belongs to the UbiD family. UbiD-like/FDC subfamily. Homodimer. May form higher order oligomers. The cofactor is Mn(2+). Requires prenylated FMN as cofactor.

The protein localises to the cytoplasm. It carries out the reaction (E)-4-coumarate + H(+) = 4-vinylphenol + CO2. The catalysed reaction is (E)-cinnamate + H(+) = styrene + CO2. The enzyme catalyses (E)-ferulate + H(+) = 2-methoxy-4-vinylphenol + CO2. Catalyzes the reversible decarboxylation of aromatic carboxylic acids like ferulic acid, p-coumaric acid or cinnamic acid, producing the corresponding vinyl derivatives 4-vinylphenol, 4-vinylguaiacol, and styrene, respectively, which play the role of aroma metabolites. This chain is Ferulic acid decarboxylase 1, found in Aspergillus niger (strain ATCC MYA-4892 / CBS 513.88 / FGSC A1513).